The sequence spans 215 residues: T-complex protein 10A homolog 1 (215 aa).

The tract at residues 1-25 is disordered; it reads MLAGQLEARDPKEGTHPEDPCPGAG. Over residues 7 to 19 the composition is skewed to basic and acidic residues; the sequence is EARDPKEGTHPED. The stretch at 69–110 forms a coiled coil; the sequence is ADVHGKLRSHIDALREQNMELREKLRALQLQRWKARKKSAAS. Positions 75–96 are leucine-zipper; sequence LRSHIDALREQNMELREKLRAL. Polar residues predominate over residues 150 to 163; sequence ATLLGQRSSSNNSA. Residues 150–215 are disordered; it reads ATLLGQRSSS…TPCAERRGGV (66 aa).

This sequence belongs to the TCP10 family. Self-associates (via leucine zipper). Interacts (via leucine zipper) with ZIPK/DAPK3 (via leucine zipper). Interacts with MAD4. Expressed in liver and testis. Expressed in the seminiferous tubules (at protein level).

The protein resides in the nucleus. Functionally, may be involved in transcriptional regulation. Has in vitro transcription inhibition activity. Acts as a tumor suppressor in hepatocellular carcinoma (HCC) cells. This chain is T-complex protein 10A homolog 1 (TCP10L), found in Homo sapiens (Human).